A 213-amino-acid chain; its full sequence is Glycerol-3-phosphate acyltransferase (213 aa).

The next 6 helical transmembrane spans lie at 2-22, 52-74, 81-100, 112-132, 143-163, and 164-184; these read ITIV…GLWI, AGMA…PIIF, PLIF…FAGF, VIFG…FGAL, VTAS…GFIL, and SNYD…IIIR.

This sequence belongs to the PlsY family. Probably interacts with PlsX.

It is found in the cell membrane. It carries out the reaction an acyl phosphate + sn-glycerol 3-phosphate = a 1-acyl-sn-glycero-3-phosphate + phosphate. The protein operates within lipid metabolism; phospholipid metabolism. Functionally, catalyzes the transfer of an acyl group from acyl-phosphate (acyl-PO(4)) to glycerol-3-phosphate (G3P) to form lysophosphatidic acid (LPA). This enzyme utilizes acyl-phosphate as fatty acyl donor, but not acyl-CoA or acyl-ACP. This Streptococcus pneumoniae (strain ATCC 700669 / Spain 23F-1) protein is Glycerol-3-phosphate acyltransferase.